Reading from the N-terminus, the 376-residue chain is Dihydroorotate dehydrogenase (quinone) (376 aa).

FMN is bound by residues 74–78 (AGFDK) and T98. A substrate-binding site is contributed by K78. Residue 123-127 (NRMGF) coordinates substrate. Residues N155 and N188 each contribute to the FMN site. A substrate-binding site is contributed by N188. The active-site Nucleophile is the S191. A substrate-binding site is contributed by N193. FMN is bound by residues K226 and T254. 255 to 256 (NT) contributes to the substrate binding site. FMN-binding positions include G284, G313, and 334-335 (YT).

The protein belongs to the dihydroorotate dehydrogenase family. Type 2 subfamily. As to quaternary structure, monomer. FMN serves as cofactor.

The protein resides in the cell membrane. It catalyses the reaction (S)-dihydroorotate + a quinone = orotate + a quinol. The protein operates within pyrimidine metabolism; UMP biosynthesis via de novo pathway; orotate from (S)-dihydroorotate (quinone route): step 1/1. Catalyzes the conversion of dihydroorotate to orotate with quinone as electron acceptor. The protein is Dihydroorotate dehydrogenase (quinone) of Nostoc punctiforme (strain ATCC 29133 / PCC 73102).